Reading from the N-terminus, the 941-residue chain is Translation initiation factor IF-2 (941 aa).

The span at 170 to 209 (DAQKAEVDAQKAEAEKPVEVKADESAIEEKKRVAAEESKK) shows a compositional bias: basic and acidic residues. Disordered regions lie at residues 170–228 (DAQK…KAAA) and 252–351 (RAIK…SNFQ). A compositionally biased stretch (low complexity) spans 256 to 269 (APEPVAPVAKPAAE). A compositionally biased stretch (basic and acidic residues) spans 271 to 297 (TLHKPADKKPGEKKDEKKPAVTADKKS). Polar residues predominate over residues 299 to 308 (KSANVSSTWQ). One can recognise a tr-type G domain in the interval 441–610 (PRAPVVTVMG…LLQAEVLELK (170 aa)). The tract at residues 450-457 (GHVDHGKT) is G1. 450 to 457 (GHVDHGKT) serves as a coordination point for GTP. Positions 475 to 479 (GITQH) are G2. The G3 stretch occupies residues 496–499 (DTPG). Residues 496-500 (DTPGH) and 550-553 (NKID) each bind GTP. The interval 550–553 (NKID) is G4. The interval 586-588 (SAK) is G5.

It belongs to the TRAFAC class translation factor GTPase superfamily. Classic translation factor GTPase family. IF-2 subfamily.

It is found in the cytoplasm. One of the essential components for the initiation of protein synthesis. Protects formylmethionyl-tRNA from spontaneous hydrolysis and promotes its binding to the 30S ribosomal subunits. Also involved in the hydrolysis of GTP during the formation of the 70S ribosomal complex. This is Translation initiation factor IF-2 from Herminiimonas arsenicoxydans.